The chain runs to 436 residues: MVLPTVAIVGRPNVGKSTLFNRIAGERISIVEDVEGVTRDRIYATGEWLNRQFSLIDTGGIDDVDAPFMEQIKHQAQIAMEEADVIVFVVSGKEGVTDADEYVSKILYRTNTPVILAVNKVDNPEMRNDIYDFYSLGLGDPYPVSSVHGIGTGDVLDAIVENLPVEEAEENDDIIRFSLIGRPNVGKSSLINAILGEDRVIASPVAGTTRDAIDTHFTDADGQEFTMIDTAGMRKSGKIYENTEKYSVMRAMRAIDRSDVVLMVINAEEGIREYDKRIAGFAHEAGKGMIIVVNKWDTLDKDNHTVAKWEADIRDQFQFLTYAPIIFVSALTKQRLNKLPDLIKRISESQNKRIPSAVLNDVIMDAIAINPTPTDKGKRLKIFYATQVSVKPPTFVVFVNEEELMHFSYLRFLENQIRAAFTFEGTPIHLIARKRK.

EngA-type G domains are found at residues 4-167 and 175-351; these read PTVA…PVEE and IRFS…ESQN. GTP-binding positions include 10-17, 57-61, 119-122, 181-188, 229-233, and 294-297; these read GRPNVGKS, DTGGI, NKVD, DTAGM, and NKWD. Positions 352–436 constitute a KH-like domain; it reads KRIPSAVLND…PIHLIARKRK (85 aa).

It belongs to the TRAFAC class TrmE-Era-EngA-EngB-Septin-like GTPase superfamily. EngA (Der) GTPase family. As to quaternary structure, associates with the 50S ribosomal subunit.

In terms of biological role, GTPase that plays an essential role in the late steps of ribosome biogenesis. The polypeptide is GTPase Der (Streptococcus pyogenes serotype M2 (strain MGAS10270)).